We begin with the raw amino-acid sequence, 101 residues long: NADH-quinone oxidoreductase subunit K (101 aa).

The next 3 membrane-spanning stretches (helical) occupy residues 4 to 24 (LADY…GIFI), 30 to 50 (LVLL…FIAF), and 61 to 81 (VFVF…LAIV).

The protein belongs to the complex I subunit 4L family. As to quaternary structure, NDH-1 is composed of 14 different subunits. Subunits NuoA, H, J, K, L, M, N constitute the membrane sector of the complex.

Its subcellular location is the cell inner membrane. It catalyses the reaction a quinone + NADH + 5 H(+)(in) = a quinol + NAD(+) + 4 H(+)(out). NDH-1 shuttles electrons from NADH, via FMN and iron-sulfur (Fe-S) centers, to quinones in the respiratory chain. The immediate electron acceptor for the enzyme in this species is believed to be ubiquinone. Couples the redox reaction to proton translocation (for every two electrons transferred, four hydrogen ions are translocated across the cytoplasmic membrane), and thus conserves the redox energy in a proton gradient. In Alkalilimnicola ehrlichii (strain ATCC BAA-1101 / DSM 17681 / MLHE-1), this protein is NADH-quinone oxidoreductase subunit K.